We begin with the raw amino-acid sequence, 262 residues long: uncharacterized protein (262 aa).

Helical transmembrane passes span 21 to 41, 94 to 114, 139 to 159, 164 to 184, 205 to 225, and 240 to 260; these read ILITYFLCWAGFLFSFSVGKF, IVSNFMGCLIIMFALGALAYL, LLILFIFTVINPLTGLIGVNL, LIAVLPHGFFEFFGFATAVVV, IVILIACSFIFIFIAGMLEPI, and LLAAFATGYKNLFLYLISMLF.

Its subcellular location is the cell membrane. This is an uncharacterized protein from Methanocaldococcus jannaschii (strain ATCC 43067 / DSM 2661 / JAL-1 / JCM 10045 / NBRC 100440) (Methanococcus jannaschii).